The primary structure comprises 289 residues: HTH-type transcriptional regulator SoxR (289 aa).

An HTH lysR-type domain is found at 1 to 58 (MEIKDLQIFQKVVEYGSVSKAAKSLNYVQSYVTVRIQKLEEELQTELFHRSSRGMVLN). The segment at residues 18–37 (VSKAAKSLNYVQSYVTVRIQ) is a DNA-binding region (H-T-H motif).

The protein belongs to the LysR transcriptional regulatory family.

In terms of biological role, transcriptional repressor of soxA gene expression. The polypeptide is HTH-type transcriptional regulator SoxR (soxR) (Arthrobacter sp. (strain TE1826)).